Consider the following 226-residue polypeptide: Ribose-5-phosphate isomerase A (226 aa).

Residues 28–31 (TGST), 80–83 (DGAD), and 93–96 (KGGG) each bind substrate. The Proton acceptor role is filled by Glu102. A substrate-binding site is contributed by Lys120.

This sequence belongs to the ribose 5-phosphate isomerase family. As to quaternary structure, homodimer.

The catalysed reaction is aldehydo-D-ribose 5-phosphate = D-ribulose 5-phosphate. Its pathway is carbohydrate degradation; pentose phosphate pathway; D-ribose 5-phosphate from D-ribulose 5-phosphate (non-oxidative stage): step 1/1. In terms of biological role, catalyzes the reversible conversion of ribose-5-phosphate to ribulose 5-phosphate. The protein is Ribose-5-phosphate isomerase A of Caulobacter sp. (strain K31).